The chain runs to 445 residues: 6-phosphogluconate dehydrogenase, decarboxylating (445 aa).

Residues 1–4, 22–24, 63–65, and asparagine 91 each bind NADP(+); these read AVMG, NRS, and VKA. Substrate-binding positions include asparagine 91 and 117 to 119; that span reads SGG. The active-site Proton acceptor is the lysine 172. 175-176 serves as a coordination point for substrate; it reads HN. Glutamate 179 acts as the Proton donor in catalysis. 5 residues coordinate substrate: tyrosine 180, lysine 249, arginine 276, arginine 434, and histidine 440.

Belongs to the 6-phosphogluconate dehydrogenase family. In terms of assembly, homodimer.

It catalyses the reaction 6-phospho-D-gluconate + NADP(+) = D-ribulose 5-phosphate + CO2 + NADPH. Its pathway is carbohydrate degradation; pentose phosphate pathway; D-ribulose 5-phosphate from D-glucose 6-phosphate (oxidative stage): step 3/3. Its function is as follows. Catalyzes the oxidative decarboxylation of 6-phosphogluconate to ribulose 5-phosphate and CO(2), with concomitant reduction of NADP to NADPH. In Shigella sonnei, this protein is 6-phosphogluconate dehydrogenase, decarboxylating (gnd).